A 309-amino-acid chain; its full sequence is HPr kinase/phosphorylase (309 aa).

Active-site residues include H138 and K159. ATP is bound at residue 153–160 (GQSGVGKS). A Mg(2+)-binding site is contributed by S160. The active-site Proton acceptor; for phosphorylation activity. Proton donor; for dephosphorylation activity is the D177. Residues 201–210 (LEIRGLGIIN) are important for the catalytic mechanism of both phosphorylation and dephosphorylation. E202 contributes to the Mg(2+) binding site. R243 is a catalytic residue. The interval 264–269 (PVRPGR) is important for the catalytic mechanism of dephosphorylation.

It belongs to the HPrK/P family. In terms of assembly, homohexamer. Requires Mg(2+) as cofactor.

The catalysed reaction is [HPr protein]-L-serine + ATP = [HPr protein]-O-phospho-L-serine + ADP + H(+). It catalyses the reaction [HPr protein]-O-phospho-L-serine + phosphate + H(+) = [HPr protein]-L-serine + diphosphate. Functionally, catalyzes the ATP- as well as the pyrophosphate-dependent phosphorylation of a specific serine residue in HPr, a phosphocarrier protein of the phosphoenolpyruvate-dependent sugar phosphotransferase system (PTS). HprK/P also catalyzes the pyrophosphate-producing, inorganic phosphate-dependent dephosphorylation (phosphorolysis) of seryl-phosphorylated HPr (P-Ser-HPr). The two antagonistic activities of HprK/P are regulated by several intracellular metabolites, which change their concentration in response to the absence or presence of rapidly metabolisable carbon sources (glucose, fructose, etc.) in the growth medium. Also phosphorylates/dephosphorylates the HPr-like catabolite repression protein crh on a specific serine residue. Therefore, by controlling the phosphorylation state of HPr and crh, HPrK/P is a sensor enzyme that plays a major role in the regulation of carbon metabolism and sugar transport: it mediates carbon catabolite repression (CCR), and regulates PTS-catalyzed carbohydrate uptake and inducer exclusion. The chain is HPr kinase/phosphorylase from Bacillus anthracis (strain A0248).